Here is a 431-residue protein sequence, read N- to C-terminus: tRNA (adenine(37)-N6)-methyltransferase (431 aa).

Residues 30–168 (TEPIGYLESC…YIADYDSPQN (139 aa)) enclose the TsaA-like domain. S-adenosyl-L-methionine contacts are provided by residues 47–49 (PRQ), 90–91 (HK), R117, L127, and 148–151 (IHGT). Disordered stretches follow at residues 167-189 (QNLE…ATAN) and 201-243 (KAQP…DRER). Over residues 207–243 (STKEKPKCREHRTSDENSQKFRDTSEIQHTLPEDRER) the composition is skewed to basic and acidic residues.

Belongs to the tRNA methyltransferase O family.

The catalysed reaction is N(6)-L-threonylcarbamoyladenosine(37) in tRNA + S-adenosyl-L-methionine = N(6)-methyl,N(6)-L-threonylcarbamoyladenosine(37) in tRNA + S-adenosyl-L-homocysteine + H(+). Functionally, S-adenosyl-L-methionine-dependent methyltransferase responsible for the addition of the methyl group in the formation of N6-methyl-N6-threonylcarbamoyladenosine at position 37 (m(6)t(6)A37) of the tRNA anticodon loop of tRNA(Ser)(GCU). The methyl group of m(6)t(6)A37 may improve the efficiency of the tRNA decoding ability. May bind to tRNA. This chain is tRNA (adenine(37)-N6)-methyltransferase, found in Rattus norvegicus (Rat).